We begin with the raw amino-acid sequence, 61 residues long: Probable tautomerase LL0574 (61 aa).

The active-site Proton acceptor; via imino nitrogen is the Pro-2.

It belongs to the 4-oxalocrotonate tautomerase family.

This Lactococcus lactis subsp. lactis (strain IL1403) (Streptococcus lactis) protein is Probable tautomerase LL0574.